The sequence spans 193 residues: Zinc finger protein AZF3 (193 aa).

2 C2H2-type zinc fingers span residues 75-97 (YKCGVCYKTFSSYQALGGHKASH) and 118-140 (HVCSVCGKSFATGQALGGHKRCH).

In terms of tissue distribution, expressed in roots.

It is found in the nucleus. In terms of biological role, transcriptional repressor probably involved in abiotic stress responses. Binds DNA in a sequence-specific manner and can repress the transactivation activity of other transcription factors. The polypeptide is Zinc finger protein AZF3 (AZF3) (Arabidopsis thaliana (Mouse-ear cress)).